The sequence spans 402 residues: S-adenosylmethionine synthase (402 aa).

140 to 145 (GNGSID) lines the ATP pocket.

Belongs to the AdoMet synthase 2 family. Mg(2+) serves as cofactor.

The catalysed reaction is L-methionine + ATP + H2O = S-adenosyl-L-methionine + phosphate + diphosphate. It functions in the pathway amino-acid biosynthesis; S-adenosyl-L-methionine biosynthesis; S-adenosyl-L-methionine from L-methionine: step 1/1. In terms of biological role, catalyzes the formation of S-adenosylmethionine from methionine and ATP. The polypeptide is S-adenosylmethionine synthase (Picrophilus torridus (strain ATCC 700027 / DSM 9790 / JCM 10055 / NBRC 100828 / KAW 2/3)).